Here is a 1050-residue protein sequence, read N- to C-terminus: Self-sufficient cytochrome P450 monooxygenase CYP505E5 (1050 aa).

Cys405 contributes to the heme binding site. The interval 461-495 is disordered; sequence TATGLSRRSMLVARDGSSEESSNHPAEARGDHAPA. In terms of domain architecture, Flavodoxin-like spans 500–641; that stretch reads VSFFYGSNSG…DLEAWEETSL (142 aa). Residues 506–510 and 585–617 each bind FMN; these read SNSGT and VFGCGHHDWTQTFYRIPILIDDLMYKAGATRLA. One can recognise an FAD-binding FR-type domain in the interval 679-907; sequence KGLIEAKVTA…RPAKETFHLP (229 aa).

This sequence in the N-terminal section; belongs to the cytochrome P450 family. The cofactor is FAD. FMN is required as a cofactor. Requires heme as cofactor.

It carries out the reaction 2 oxidized [cytochrome P450] + NADPH = 2 reduced [cytochrome P450] + NADP(+) + H(+). It catalyses the reaction an organic molecule + reduced [NADPH--hemoprotein reductase] + O2 = an alcohol + oxidized [NADPH--hemoprotein reductase] + H2O + H(+). The catalysed reaction is dodecanoate + reduced [NADPH--hemoprotein reductase] + O2 = 5-hydroxydodecanoate + oxidized [NADPH--hemoprotein reductase] + H2O + H(+). The enzyme catalyses tetradecanoate + reduced [NADPH--hemoprotein reductase] + O2 = 7-hydroxytetradecanoate + oxidized [NADPH--hemoprotein reductase] + H2O + H(+). It carries out the reaction dodecan-1-ol + reduced [NADPH--hemoprotein reductase] + O2 = 1,5-dodecanediol + oxidized [NADPH--hemoprotein reductase] + H2O + H(+). It catalyses the reaction dodecan-1-ol + reduced [NADPH--hemoprotein reductase] + O2 = 1,4-dodecanediol + oxidized [NADPH--hemoprotein reductase] + H2O + H(+). The catalysed reaction is dodecan-1-ol + reduced [NADPH--hemoprotein reductase] + O2 = 1,6-dodecanediol + oxidized [NADPH--hemoprotein reductase] + H2O + H(+). Its function is as follows. Self-sufficient cytochrome P450 monooxygenase that catalyzes the regioselective in-chain hydroxylation of alkanes, fatty alcohols, and fatty acids at the omega-7 position. Performs hydroxylation of C10-C16 n-alkanes and C12 and C14 fatty alcohols; and thereby enables the one step biocatalytic synthesis of rare alcohols such as 5-dodecanol and 7-tetradecanol. Converts 1-dodecanol into 1,5-dodecanediol as major product with very little sub-terminally hydroxylated products with the 1,4-dodecanediol and 1,6-dodecanediol more abundant. Converts dodecanoic acid to 5-hydroxydodecanoic acid which can be further converted into delta-dodecalactone by lactonization of the 5-hydroxy acid at low pH. Also gives sub-terminal hydroxylation of dodecanoic acid with 9-hydroxydodecanoic acid being the second most abundant product. In Aspergillus kawachii (strain NBRC 4308) (White koji mold), this protein is Self-sufficient cytochrome P450 monooxygenase CYP505E5.